Consider the following 209-residue polypeptide: Large ribosomal subunit protein uL3 (209 aa).

The tract at residues 133–152 (THGNSLSHRVPGSIGQNQTP) is disordered. Gln150 is subject to N5-methylglutamine.

Belongs to the universal ribosomal protein uL3 family. In terms of assembly, part of the 50S ribosomal subunit. Forms a cluster with proteins L14 and L19. Methylated by PrmB.

Functionally, one of the primary rRNA binding proteins, it binds directly near the 3'-end of the 23S rRNA, where it nucleates assembly of the 50S subunit. The protein is Large ribosomal subunit protein uL3 of Shigella sonnei (strain Ss046).